The sequence spans 327 residues: Putative gluconeogenesis factor (327 aa).

Belongs to the gluconeogenesis factor family.

It is found in the cytoplasm. Its function is as follows. Required for morphogenesis under gluconeogenic growth conditions. This chain is Putative gluconeogenesis factor (yjiF), found in Lactococcus lactis subsp. lactis (strain IL1403) (Streptococcus lactis).